We begin with the raw amino-acid sequence, 641 residues long: Soluble starch synthase 1, chloroplastic/amyloplastic (641 aa).

The N-terminal 113 residues, 1–113 (MATAAGMGIG…DSIDKTIFVA (113 aa)), are a transit peptide targeting the chloroplast. The disordered stretch occupies residues 62-96 (TFLVPTSTPPAPTQSPAPAPTPPPLPDSGVGEIEP). Positions 68-87 (STPPAPTQSPAPAPTPPPLP) are enriched in pro residues. Lys-147 contributes to the ADP-alpha-D-glucose binding site.

This sequence belongs to the glycosyltransferase 1 family. Bacterial/plant glycogen synthase subfamily. In terms of tissue distribution, leaves and immature seeds.

The protein localises to the plastid. Its subcellular location is the chloroplast. It localises to the amyloplast. It catalyses the reaction [(1-&gt;4)-alpha-D-glucosyl](n) + ADP-alpha-D-glucose = [(1-&gt;4)-alpha-D-glucosyl](n+1) + ADP + H(+). Its pathway is glycan biosynthesis; starch biosynthesis. Functionally, involved in starch synthesis in endosperm amyloplasts. Plays a role in the elongation of amylopectin chains. Synthesizes preferentially amylopectin chains with a degree of polymerization (DP) of 7 to 11 by elongating chains with a DP of 4 to 7. Generates distincly chains with a DP of 8 to 12 chains from short chains with a DP of 6 to 7. This Oryza sativa subsp. japonica (Rice) protein is Soluble starch synthase 1, chloroplastic/amyloplastic.